Reading from the N-terminus, the 306-residue chain is GTP cyclohydrolase FolE2 (306 aa).

This sequence belongs to the GTP cyclohydrolase IV family.

It catalyses the reaction GTP + H2O = 7,8-dihydroneopterin 3'-triphosphate + formate + H(+). Its pathway is cofactor biosynthesis; 7,8-dihydroneopterin triphosphate biosynthesis; 7,8-dihydroneopterin triphosphate from GTP: step 1/1. In terms of biological role, converts GTP to 7,8-dihydroneopterin triphosphate. The sequence is that of GTP cyclohydrolase FolE2 from Pseudoalteromonas atlantica (strain T6c / ATCC BAA-1087).